A 96-amino-acid polypeptide reads, in one-letter code: Large ribosomal subunit protein bL28 (96 aa).

This sequence belongs to the bacterial ribosomal protein bL28 family.

This chain is Large ribosomal subunit protein bL28, found in Methylocella silvestris (strain DSM 15510 / CIP 108128 / LMG 27833 / NCIMB 13906 / BL2).